Reading from the N-terminus, the 279-residue chain is Putative pyruvate, phosphate dikinase regulatory protein (279 aa).

152–159 provides a ligand contact to ADP; it reads GVSRTSKS.

It belongs to the pyruvate, phosphate/water dikinase regulatory protein family. PDRP subfamily.

It catalyses the reaction N(tele)-phospho-L-histidyl/L-threonyl-[pyruvate, phosphate dikinase] + ADP = N(tele)-phospho-L-histidyl/O-phospho-L-threonyl-[pyruvate, phosphate dikinase] + AMP + H(+). The catalysed reaction is N(tele)-phospho-L-histidyl/O-phospho-L-threonyl-[pyruvate, phosphate dikinase] + phosphate + H(+) = N(tele)-phospho-L-histidyl/L-threonyl-[pyruvate, phosphate dikinase] + diphosphate. Functionally, bifunctional serine/threonine kinase and phosphorylase involved in the regulation of the pyruvate, phosphate dikinase (PPDK) by catalyzing its phosphorylation/dephosphorylation. The protein is Putative pyruvate, phosphate dikinase regulatory protein of Anaplasma marginale (strain St. Maries).